An 810-amino-acid chain; its full sequence is Plasminogen (810 aa).

The first 19 residues, 1-19 (MEHKEVVLLLLLFLKSGQG), serve as a signal peptide directing secretion. Positions 20 to 98 (EPLDDYVNTQ…RDVVLFEKKV (79 aa)) constitute a PAN domain. Intrachain disulfides connect C49/C73, C53/C61, C103/C181, C124/C164, C152/C176, C185/C262, C188/C316, C206/C245, C234/C257, C275/C352, C296/C335, and C324/C347. Kringle domains lie at 103 to 181 (CKTG…ILEC) and 184 to 262 (ECMH…IPRC). The interval 126-145 (KWSSTSPHRPRFSPATHPSE) is disordered. The L-lysine site is built by R136, D158, and R172. The O-linked (GalNAc...) serine glycan is linked to S268. The Kringle 3 domain occupies 275 to 352 (CLKGTGENYR…RWEYCKIPSC (78 aa)). N-linked (GlcNAc...) asparagine glycosylation occurs at N308. A glycan (O-linked (GalNAc...) threonine) is linked at T365. 9 disulfides stabilise this stretch: C377–C454, C398–C437, C426–C449, C481–C560, C502–C543, C531–C555, C567–C685, C577–C585, and C607–C623. Kringle domains lie at 377–454 (CYHG…LKKC) and 481–560 (CMFG…VPQC). The disordered stretch occupies residues 396–416 (KKCQSWSSMTPHRHQKTPENY). The L-lysine site is built by D432 and R445. Positions 581–808 (VVGGCVAHPH…FVTWIEGVMR (228 aa)) constitute a Peptidase S1 domain. S597 carries the phosphoserine modification. Active-site charge relay system residues include H622 and D665. S688 is modified (phosphoserine). Cystine bridges form between C699-C766, C729-C745, and C756-C784. S760 serves as the catalytic Charge relay system.

The protein belongs to the peptidase S1 family. Plasminogen subfamily. Interacts (both mature PLG and the angiostatin peptide) with CSPG4 and AMOT. Interacts (via the Kringle domains) with HRG; the interaction tethers PLG to the cell surface and enhances its activation. Interacts (via Kringle 4 domain) with ADA; the interaction stimulates PLG activation when in complex with DPP4. Angiostatin: Interacts with ATP5F1A; the interaction inhibits most of the angiogenic effects of angiostatin. Interacts (plasmin) with iripin-8, a serine protease inhibitor from Ixodes ricinus saliva. Interacts (plasmin) with iripin-1, a serine protease inhibitor from Ixodes ricinus saliva. Interacts (plasmin) with Kazal-type trypsin inhibitor, a serine protease inhibitor from Aedes aegypti. In terms of assembly, (Microbial infection) Interacts with C.albicans GPD2; the interaction is direct and provides active plasmin on the surface of fungal cells. As to quaternary structure, (Microbial infection) Interacts with Staphylococcus aureus protein FnbB; this interaction provides active plasmin on the surface of bacterial cells. (Microbial infection) Interacts with P.falciparum (strain NF54) enolase ENO (via DKSLVK motif); the interaction occurs at the ookinete cell surface and is required for ookinete invasion of the mosquito midgut. In terms of assembly, (Microbial infection) Interacts with B.burgdorferi OspC. N-linked glycan contains N-acetyllactosamine and sialic acid. O-linked glycans consist of Gal-GalNAc disaccharide modified with up to 2 sialic acid residues (microheterogeneity). Post-translationally, in the presence of the inhibitor, the activation involves only cleavage after Arg-580, yielding two chains held together by two disulfide bonds. In the absence of the inhibitor, the activation involves additionally the removal of the activation peptide. In terms of processing, (Microbial infection) The Y.pestis Pla protein cleaves between Arg-580 and Val-581, generating plasmin which facilitates bacterial migration and infection. In terms of tissue distribution, present in plasma and many other extracellular fluids. It is synthesized in the liver.

It is found in the secreted. The catalysed reaction is Preferential cleavage: Lys-|-Xaa &gt; Arg-|-Xaa, higher selectivity than trypsin. Converts fibrin into soluble products.. With respect to regulation, converted into plasmin by plasminogen activators, both plasminogen and its activator being bound to fibrin. Activated with catalytic amounts of streptokinase. Plasmin activity inhibited by SERPINE2. In terms of biological role, plasmin dissolves the fibrin of blood clots and acts as a proteolytic factor in a variety of other processes including embryonic development, tissue remodeling, tumor invasion, and inflammation. In ovulation, weakens the walls of the Graafian follicle. It activates the urokinase-type plasminogen activator, collagenases and several complement zymogens, such as C1, C4 and C5. Cleavage of fibronectin and laminin leads to cell detachment and apoptosis. Also cleaves fibrin, thrombospondin and von Willebrand factor. Its role in tissue remodeling and tumor invasion may be modulated by CSPG4. Binds to cells. Functionally, angiostatin is an angiogenesis inhibitor that blocks neovascularization and growth of experimental primary and metastatic tumors in vivo. (Microbial infection) ENO/enoloase from parasite P.falciparum (strain NF54) interacts with PLG present in the mosquito blood meal to promote the invasion of the mosquito midgut by the parasite ookinete. The catalytic active form, plasmin, is essential for the invasion of the mosquito midgut. Its function is as follows. (Microbial infection) Binds to OspC on the surface of B.burgdorferi cells, possibly conferring an extracellular protease activity on the bacteria that allows it to traverse host tissue. In terms of biological role, (Microbial infection) Interacts with dengue virus type 2 particles. Enhances dengue virus type 2 infection in Aedes aegypti mosquito midgut by increasing midgut internalization, resulting in higher infection rates and viral dissemination in mosquitoes. This is Plasminogen (PLG) from Homo sapiens (Human).